Consider the following 714-residue polypeptide: ATP-dependent DNA helicase DinG (714 aa).

One can recognise a Helicase ATP-binding domain in the interval 17–294 (ALQDQIPDFI…TCMEQFRPKT (278 aa)). An ATP-binding site is contributed by 54–61 (APTGVGKT). [4Fe-4S] cluster is bound by residues Cys120, Cys194, Cys199, and Cys205. The DEAH box signature appears at 248 to 251 (DEGH). The region spanning 517 to 698 (HIAEMAAYFR…VFPIEQPAVP (182 aa)) is the Helicase C-terminal domain.

It belongs to the helicase family. DinG subfamily. Type 1 sub-subfamily. [4Fe-4S] cluster serves as cofactor.

It carries out the reaction Couples ATP hydrolysis with the unwinding of duplex DNA at the replication fork by translocating in the 5'-3' direction. This creates two antiparallel DNA single strands (ssDNA). The leading ssDNA polymer is the template for DNA polymerase III holoenzyme which synthesizes a continuous strand.. The enzyme catalyses ATP + H2O = ADP + phosphate + H(+). Functionally, DNA-dependent ATPase and 5'-3' DNA helicase. Unwinds D-loops, R-loops, forked DNA and G-quadruplex DNA. The polypeptide is ATP-dependent DNA helicase DinG (Salmonella paratyphi A (strain ATCC 9150 / SARB42)).